A 1071-amino-acid polypeptide reads, in one-letter code: ATP-dependent helicase/deoxyribonuclease subunit B (1071 aa).

Belongs to the helicase family. AddB/RexB type 2 subfamily. As to quaternary structure, heterodimer of AddA and RexB. Requires Mg(2+) as cofactor.

Functionally, the heterodimer acts as both an ATP-dependent DNA helicase and an ATP-dependent, dual-direction single-stranded exonuclease. Recognizes the chi site generating a DNA molecule suitable for the initiation of homologous recombination. This subunit has 5' -&gt; 3' nuclease activity but not helicase activity. This Streptococcus pyogenes serotype M4 (strain MGAS10750) protein is ATP-dependent helicase/deoxyribonuclease subunit B.